Consider the following 90-residue polypeptide: DNA-binding protein HU-beta (90 aa).

It belongs to the bacterial histone-like protein family. In terms of assembly, heterodimer of an alpha and a beta chain.

Histone-like DNA-binding protein which is capable of wrapping DNA to stabilize it, and thus to prevent its denaturation under extreme environmental conditions. The protein is DNA-binding protein HU-beta (hupB) of Escherichia coli O6:H1 (strain CFT073 / ATCC 700928 / UPEC).